The following is a 405-amino-acid chain: Arginine biosynthesis bifunctional protein ArgJ (405 aa).

6 residues coordinate substrate: T152, K178, T189, E276, N400, and T405. Residue T189 is the Nucleophile of the active site.

Belongs to the ArgJ family. As to quaternary structure, heterotetramer of two alpha and two beta chains.

The protein resides in the cytoplasm. The catalysed reaction is N(2)-acetyl-L-ornithine + L-glutamate = N-acetyl-L-glutamate + L-ornithine. It carries out the reaction L-glutamate + acetyl-CoA = N-acetyl-L-glutamate + CoA + H(+). It functions in the pathway amino-acid biosynthesis; L-arginine biosynthesis; L-ornithine and N-acetyl-L-glutamate from L-glutamate and N(2)-acetyl-L-ornithine (cyclic): step 1/1. It participates in amino-acid biosynthesis; L-arginine biosynthesis; N(2)-acetyl-L-ornithine from L-glutamate: step 1/4. Its function is as follows. Catalyzes two activities which are involved in the cyclic version of arginine biosynthesis: the synthesis of N-acetylglutamate from glutamate and acetyl-CoA as the acetyl donor, and of ornithine by transacetylation between N(2)-acetylornithine and glutamate. In Pseudomonas putida (strain ATCC 47054 / DSM 6125 / CFBP 8728 / NCIMB 11950 / KT2440), this protein is Arginine biosynthesis bifunctional protein ArgJ.